We begin with the raw amino-acid sequence, 416 residues long: 3-oxoacyl-[acyl-carrier-protein] synthase 2 (416 aa).

In terms of domain architecture, Ketosynthase family 3 (KS3) spans 6–414 (KKRVVVTGLG…GHNVTLAFKK (409 aa)). Catalysis depends on for beta-ketoacyl synthase activity residues C167, H307, and H344.

This sequence belongs to the thiolase-like superfamily. Beta-ketoacyl-ACP synthases family. As to quaternary structure, homodimer.

The enzyme catalyses a fatty acyl-[ACP] + malonyl-[ACP] + H(+) = a 3-oxoacyl-[ACP] + holo-[ACP] + CO2. The catalysed reaction is (9Z)-hexadecenoyl-[ACP] + malonyl-[ACP] + H(+) = 3-oxo-(11Z)-octadecenoyl-[ACP] + holo-[ACP] + CO2. It functions in the pathway lipid metabolism; fatty acid biosynthesis. In terms of biological role, involved in the type II fatty acid elongation cycle. Catalyzes the elongation of a wide range of acyl-ACP by the addition of two carbons from malonyl-ACP to an acyl acceptor. Can efficiently catalyze the conversion of palmitoleoyl-ACP (cis-hexadec-9-enoyl-ACP) to cis-vaccenoyl-ACP (cis-octadec-11-enoyl-ACP), an essential step in the thermal regulation of fatty acid composition. This Synechocystis sp. (strain ATCC 27184 / PCC 6803 / Kazusa) protein is 3-oxoacyl-[acyl-carrier-protein] synthase 2 (fabF).